We begin with the raw amino-acid sequence, 102 residues long: Large ribosomal subunit protein uL24 (102 aa).

The protein belongs to the universal ribosomal protein uL24 family. As to quaternary structure, part of the 50S ribosomal subunit.

Its function is as follows. One of two assembly initiator proteins, it binds directly to the 5'-end of the 23S rRNA, where it nucleates assembly of the 50S subunit. In terms of biological role, one of the proteins that surrounds the polypeptide exit tunnel on the outside of the subunit. This chain is Large ribosomal subunit protein uL24, found in Finegoldia magna (strain ATCC 29328 / DSM 20472 / WAL 2508) (Peptostreptococcus magnus).